The sequence spans 196 residues: Large ribosomal subunit protein uL18 (196 aa).

It belongs to the universal ribosomal protein uL18 family. Part of the 50S ribosomal subunit. Contacts the 5S and 23S rRNAs.

Functionally, this is one of the proteins that bind and probably mediate the attachment of the 5S RNA into the large ribosomal subunit, where it forms part of the central protuberance. The polypeptide is Large ribosomal subunit protein uL18 (Saccharolobus islandicus (strain L.S.2.15 / Lassen #1) (Sulfolobus islandicus)).